The sequence spans 794 residues: MPAKDDTSSDKEKSLELFLKIGLDERTAKNTVANNKVTTNLTSVINDAGVTDGCSRTVGNLLYTVATKYPANALPHRPTLLQYIVNSKVKTTAQLDAALSFLSATGSENLDLNKFEEACGVGVEVSTEDIKHAVDEVVEENKATILELRYRVNVGELLGHVRKRLPWADAKVVKQLVDAKLYEILGDRTAADNEKPKKKKEKPAKVEDKAAPVATSEKPLEEDLNPYLIFPNPEDNFKVHTEVPFSDGNILRCCNTKALLEKHLKATGGKVLTRFPPEPNGYLHIGHAKAMFVDFGLAKDRNGGCYLRFDDTNPEAEKKEYIDHIEEIVQWMGWEPFKITYTSNYFQELYEFAVELIRRGHAYVDHQTADEIKEYREKKLNSPWRDRPISESLKLFEDMRRGFIEEGKATLRMKQDMQSDNYNMYDLIAYRIKFTPHPHAGDKWCIYPSYDYAHCIVDSIENVTHSLCTLEFETRRASYYWLLHALGIYQPYVWEYSRLNVSNTVMSKRKLNRLVTEKWVDGWDDPRLMTLAGLRRRGMTPTAINAFVRGMGITRSDGTLISVERLEYHVREELNKTAPRAMVVLHPLKVVITNLEAKSAIEVDAKKWPDAQADDASAFYKIPFSNVVYIERSDFRMQDSKDYYGLAPGKSVILRYAFPIKCTEVILADDNETILEIRAEYDPSKKTKPKGVLHWVSQPSPGVDPLKVEVRLFERLFLSENPAELDNWLGDLNPHSKVEISNAYGVSLLKDAKLGDRFQFERLGYFAVDQDSTPEKLVFNRTVTLKDSYGKGGK.

The disordered stretch occupies residues 192–217; that stretch reads DNEKPKKKKEKPAKVEDKAAPVATSE. Residues 277–287 carry the 'HIGH' region motif; sequence PEPNGYLHIGH. Residues 278 to 280 and 284 to 290 each bind ATP; these read EPN and HIGHAKA. L-glutamine contacts are provided by Asp-310 and Tyr-450. ATP contacts are provided by residues Thr-469, 498-499, and 506-508; these read RL and MSK. Positions 505 to 509 match the 'KMSKS' region motif; that stretch reads VMSKR.

Belongs to the class-I aminoacyl-tRNA synthetase family.

It carries out the reaction tRNA(Gln) + L-glutamine + ATP = L-glutaminyl-tRNA(Gln) + AMP + diphosphate. The protein is Glutamine--tRNA ligase of Lupinus luteus (European yellow lupine).